The sequence spans 139 residues: Heat shock protein homolog C338.06c (139 aa).

Residues 27–139 (AWLSCWGPAL…EFTTRIVEIQ (113 aa)) form the sHSP domain.

It belongs to the small heat shock protein (HSP20) family.

Its subcellular location is the mitochondrion. The protein is Heat shock protein homolog C338.06c of Schizosaccharomyces pombe (strain 972 / ATCC 24843) (Fission yeast).